We begin with the raw amino-acid sequence, 227 residues long: uncharacterized protein (227 aa).

Positions 1–23 (MKKLTVTFLTFISIFFAATAAFA) are cleaved as a signal peptide.

This is an uncharacterized protein from Coxiella burnetii (strain RSA 493 / Nine Mile phase I).